The following is a 183-amino-acid chain: MASRAGPRAAGTDGSDFQHRERVAMHYQMSVTLKYEIKKLIYVHLVIWLLLVAKMSVGHLRLLSHDQVAMPYQWEYPYLLSVVPSLLGLLSFPRNNISYLVLSMISMGLFSIAPLIYGSMEMFPAAQQLYRHGKAYRFLFGFSAVSVMYLVLVLAVQVHAWQLYYSKKLLDSWFTSTQEKKRK.

Residues 1–39 (MASRAGPRAAGTDGSDFQHRERVAMHYQMSVTLKYEIKK) lie on the Cytoplasmic side of the membrane. Position 3 is a phosphoserine (Ser3). The chain crosses the membrane as a helical span at residues 40-60 (LIYVHLVIWLLLVAKMSVGHL). At 61-71 (RLLSHDQVAMP) the chain is on the lumenal side. The helical transmembrane segment at 72-92 (YQWEYPYLLSVVPSLLGLLSF) threads the bilayer. At 93 to 96 (PRNN) the chain is on the cytoplasmic side. A helical membrane pass occupies residues 97-117 (ISYLVLSMISMGLFSIAPLIY). The Lumenal portion of the chain corresponds to 118-137 (GSMEMFPAAQQLYRHGKAYR). The helical transmembrane segment at 138–158 (FLFGFSAVSVMYLVLVLAVQV) threads the bilayer. At 159 to 183 (HAWQLYYSKKLLDSWFTSTQEKKRK) the chain is on the cytoplasmic side.

It belongs to the jagunal family. Interacts with COPA, COPB2 and COPG2.

Its subcellular location is the endoplasmic reticulum membrane. In terms of biological role, endoplasmic reticulum transmembrane protein involved in vesicle-mediated transport, which is required for neutrophil function. Required for vesicle-mediated transport; it is however unclear whether it is involved in early secretory pathway or intracellular protein transport. Acts as a regulator of neutrophil function, probably via its role in vesicle-mediated transport: required for defense against fungal pathogens and for granulocyte colony-stimulating factor (GM-CSF) signaling pathway; possibly by regulating glycosylation and/or targeting of proteins contributing to the viability and migration of neutrophils. In Bos taurus (Bovine), this protein is Protein jagunal homolog 1 (JAGN1).